A 199-amino-acid polypeptide reads, in one-letter code: MAQLFFRYGAMSSGKSIEILKVAHNYEAQGRKIALMTSNVDDRSGVGTVASRIGLHRKAVPISEDLDLFNYVSELNKSDVESGNGRVACVLIDEAQFLKRHHVLECAKIVDELKIPVMAFGLKNDFQNHLFEGSENLLIFADKVEEMKTICHYCGHKATMNLRINSGKPVYEGEQVQIGGDESYYPVCRFHYFHPNKQR.

ATP-binding positions include 9 to 16 and 93 to 96; these read GAMSSGKS and DEAQ. Glu-94 serves as the catalytic Proton acceptor. Residues Cys-151, Cys-154, Cys-188, and His-191 each contribute to the Zn(2+) site.

The protein belongs to the thymidine kinase family. In terms of assembly, homotetramer.

Its subcellular location is the cytoplasm. The catalysed reaction is thymidine + ATP = dTMP + ADP + H(+). The chain is Thymidine kinase from Lactobacillus johnsonii (strain CNCM I-12250 / La1 / NCC 533).